Here is a 275-residue protein sequence, read N- to C-terminus: Large ribosomal subunit protein uL2c (275 aa).

Residues 225-252 (MNPCDHPHGGGEGRSPIGRAKPVTPWGK) are disordered.

The protein belongs to the universal ribosomal protein uL2 family. As to quaternary structure, part of the 50S ribosomal subunit.

It localises to the plastid. It is found in the chloroplast. This chain is Large ribosomal subunit protein uL2c (rpl2), found in Guillardia theta (Cryptophyte).